A 177-amino-acid chain; its full sequence is Large ribosomal subunit protein uL6 (177 aa).

It belongs to the universal ribosomal protein uL6 family. Part of the 50S ribosomal subunit.

This protein binds to the 23S rRNA, and is important in its secondary structure. It is located near the subunit interface in the base of the L7/L12 stalk, and near the tRNA binding site of the peptidyltransferase center. The polypeptide is Large ribosomal subunit protein uL6 (Dichelobacter nodosus (strain VCS1703A)).